Here is a 181-residue protein sequence, read N- to C-terminus: Protein FAM237A (181 aa).

Residues 1–33 form the signal peptide; sequence MADPGNRGGIHRPLSFTCSLLIVGMCCVSPFFC. L113 is modified (leucine amide). Positions 114-181 are cleaved as a propeptide — removed in the mature form; sequence GRRQLVGEEE…GKVNLEIKRK (68 aa).

In terms of processing, the active form requires C-terminal amidation and disulfide bond formation. In terms of tissue distribution, expressed in the pituitary, testis, and heart and at lower levels in the brain.

It localises to the secreted. May be capable of activating GPR83 via the GNAQ signaling pathway. This chain is Protein FAM237A, found in Homo sapiens (Human).